Here is a 101-residue protein sequence, read N- to C-terminus: Urease subunit beta (101 aa).

The protein belongs to the urease beta subunit family. In terms of assembly, heterotrimer of UreA (gamma), UreB (beta) and UreC (alpha) subunits. Three heterotrimers associate to form the active enzyme.

Its subcellular location is the cytoplasm. The catalysed reaction is urea + 2 H2O + H(+) = hydrogencarbonate + 2 NH4(+). Its pathway is nitrogen metabolism; urea degradation; CO(2) and NH(3) from urea (urease route): step 1/1. The protein is Urease subunit beta of Actinobacillus pleuropneumoniae serotype 5b (strain L20).